We begin with the raw amino-acid sequence, 511 residues long: Mesoderm induction early response protein 1 (511 aa).

The segment covering 1 to 16 has biased composition (low complexity); that stretch reads MAEPSVESSSPGGSAT. Residues 1–171 form a disordered region; the sequence is MAEPSVESSS…EEESEEDEDY (171 aa). Ser-10 bears the Phosphoserine mark. Basic and acidic residues predominate over residues 17-36; it reads SEDHEFDPSADMLVHDFDDE. Positions 37–46 are enriched in acidic residues; it reads RTLEEEEMME. Over residues 57–66 the composition is skewed to basic and acidic residues; it reads DLAREGDMPI. A compositionally biased stretch (acidic residues) spans 83–104; that stretch reads EEEEEEEEEEEGEDDEDADNDD. The segment covering 128–143 has biased composition (polar residues); sequence QSSNDDPSQSVTSQDA. A Phosphoserine modification is found at Ser-140. Phosphotyrosine is present on Tyr-154. A phosphoserine mark is found at Ser-159 and Ser-165. Acidic residues predominate over residues 159–171; that stretch reads SEIEEESEEDEDY. The ELM2 domain occupies 179-277; that stretch reads KEIMVGSMFQ…EALRRLRFNV (99 aa). Lys-238 is covalently cross-linked (Glycyl lysine isopeptide (Lys-Gly) (interchain with G-Cter in SUMO2)). An SANT domain is found at 282–334; it reads EELSVWTEEECRNFEQGLKAYGKDFHLIQANKVRTRSVGECVAFYYMWKKSER. Residues 365–511 are disordered; the sequence is ESESAASSRA…KFEEHENTND (147 aa). Residues Ser-366, Ser-368, and Ser-376 each carry the phosphoserine modification. Polar residues predominate over residues 397–408; sequence SSRNQNGVSSNG. Composition is skewed to basic and acidic residues over residues 413–422 and 461–474; these read LNKEEVKVEG and ARNE…NERP. A Glycyl lysine isopeptide (Lys-Gly) (interchain with G-Cter in SUMO2) cross-link involves residue Lys-419. Positions 481–493 are enriched in polar residues; sequence NSSGKESPGSSEF. Phosphoserine occurs at positions 482, 487, and 490. A compositionally biased stretch (basic and acidic residues) spans 499–511; that stretch reads SHGKFEEHENTND.

Interacts with HDAC1. Part of a complex containing at least CDYL, MIER1, MIER2, HDAC1 and HDAC2. In terms of tissue distribution, ubiquitously expressed. Isoform 1 is only expressed in testis.

Its subcellular location is the nucleus. Transcriptional repressor regulating the expression of a number of genes including SP1 target genes. Probably functions through recruitment of HDAC1 a histone deacetylase involved in chromatin silencing. The protein is Mesoderm induction early response protein 1 (Mier1) of Mus musculus (Mouse).